A 609-amino-acid polypeptide reads, in one-letter code: UvrABC system protein C (609 aa).

The GIY-YIG domain occupies 16 to 94 (SSAGVYRMYD…IKQYMPKYNV (79 aa)). Residues 203–238 (QQVISALVDKMELAAERQAYEQAARFRDQIMALRKV) form the UVR domain.

Belongs to the UvrC family. In terms of assembly, interacts with UvrB in an incision complex.

Its subcellular location is the cytoplasm. In terms of biological role, the UvrABC repair system catalyzes the recognition and processing of DNA lesions. UvrC both incises the 5' and 3' sides of the lesion. The N-terminal half is responsible for the 3' incision and the C-terminal half is responsible for the 5' incision. The polypeptide is UvrABC system protein C (Shewanella baltica (strain OS155 / ATCC BAA-1091)).